The sequence spans 428 residues: 3-phosphoshikimate 1-carboxyvinyltransferase (428 aa).

Residues Lys22, Ser23, and Arg27 each coordinate 3-phosphoshikimate. Lys22 contributes to the phosphoenolpyruvate binding site. 2 residues coordinate phosphoenolpyruvate: Gly96 and Arg124. 7 residues coordinate 3-phosphoshikimate: Ser170, Ser171, Gln172, Ser198, Asp314, Asn337, and Lys341. Gln172 provides a ligand contact to phosphoenolpyruvate. The active-site Proton acceptor is Asp314. Residues Arg345, Arg387, and Lys412 each coordinate phosphoenolpyruvate.

It belongs to the EPSP synthase family. Monomer.

Its subcellular location is the cytoplasm. The enzyme catalyses 3-phosphoshikimate + phosphoenolpyruvate = 5-O-(1-carboxyvinyl)-3-phosphoshikimate + phosphate. The protein operates within metabolic intermediate biosynthesis; chorismate biosynthesis; chorismate from D-erythrose 4-phosphate and phosphoenolpyruvate: step 6/7. In terms of biological role, catalyzes the transfer of the enolpyruvyl moiety of phosphoenolpyruvate (PEP) to the 5-hydroxyl of shikimate-3-phosphate (S3P) to produce enolpyruvyl shikimate-3-phosphate and inorganic phosphate. The polypeptide is 3-phosphoshikimate 1-carboxyvinyltransferase (Vibrio vulnificus (strain YJ016)).